Consider the following 748-residue polypeptide: CCR4-NOT transcription complex subunit 10-B (748 aa).

Residues 1–16 are compositionally biased toward basic and acidic residues; the sequence is MAADKAGEQGAEKHEG. 3 disordered regions span residues 1–25, 483–524, and 605–634; these read MAAD…GISD, KQEN…PPSS, and VSLG…KQIP. Polar residues-rich tracts occupy residues 487 to 509 and 605 to 615; these read GSKA…VCSN and VSLGVSSNEQE.

It belongs to the CNOT10 family. As to quaternary structure, component of the CCR4-NOT complex. cnot10 and cnot11 form a subcomplex docked to the cnot1 scaffold.

The protein localises to the cytoplasm. The protein resides in the nucleus. Its function is as follows. Component of the CCR4-NOT complex which is one of the major cellular mRNA deadenylases and is linked to various cellular processes including bulk mRNA degradation, miRNA-mediated repression, translational repression during translational initiation and general transcription regulation. Additional complex functions may be a consequence of its influence on mRNA expression. Is not required for association of CNOT7 to the CCR4-NOT complex. The chain is CCR4-NOT transcription complex subunit 10-B (cnot10-b) from Xenopus laevis (African clawed frog).